A 1513-amino-acid polypeptide reads, in one-letter code: Mucin-2 (1513 aa).

Positions 1–20 are cleaved as a signal peptide; sequence MGLPLARLVAVCLVLALAKG. A VWFD 1 domain is found at 32–204; the sequence is HVCSTWGDFH…KINKPEVVCE (173 aa). 28 disulfides stabilise this stretch: Cys34–Cys166, Cys56–Cys203, Cys64–Cys163, Cys215–Cys252, Cys222–Cys247, Cys234–Cys272, Cys254–Cys260, Cys262–Cys288, Cys292–Cys326, Cys309–Cys348, Cys328–Cys342, Cys350–Cys372, Cys367–Cys384, Cys370–Cys379, Cys388–Cys525, Cys410–Cys560, Cys432–Cys440, Cys571–Cys616, Cys585–Cys611, Cys598–Cys636, Cys618–Cys624, Cys626–Cys651, Cys658–Cys695, Cys671–Cys685, Cys675–Cys715, Cys697–Cys709, Cys717–Cys739, and Cys737–Cys746. Asp46 is a binding site for Ca(2+). Residues Met143 and Met151 each contribute to the Cu(+) site. Glu153 serves as a coordination point for Cu(2+). The N-linked (GlcNAc...) asparagine glycan is linked to Asn160. Asp168, Asn170, and Glu177 together coordinate Ca(2+). Cu(2+) is bound by residues His274 and His321. The TIL domain maps to 292-348; sequence CPGNMVYLESGSPWLDTCSHLEVSSLCEEHYMDGCFCPEGTVYDDITGSGCIPVSQC. Residue Met323 coordinates Cu(+). A VWFC domain is found at 350 to 410; that stretch reads CKLHGHLYMP…GKKFTFHGDC (61 aa). In terms of domain architecture, VWFD 2 spans 386–561; sequence ETCALEGGSH…NTWKAQSSCH (176 aa). Asp400 is a Ca(2+) binding site. N-linked (GlcNAc...) asparagine glycosylation occurs at Asn420. Residues Asn527, Asn529, Leu531, Asp534, and Asp535 each contribute to the Ca(2+) site. Asn667 carries an N-linked (GlcNAc...) asparagine glycan. Residue Asn767 is glycosylated (N-linked (GlcNAc...) asparagine). Intrachain disulfides connect Cys781-Cys817, Cys799-Cys811, Cys819-Cys842, Cys836-Cys854, Cys840-Cys849, Cys858-Cys989, Cys880-Cys1024, Cys889-Cys986, Cys906-Cys913, Cys1034-Cys1077, Cys1048-Cys1072, Cys1059-Cys1099, Cys1079-Cys1087, Cys1089-Cys1114, Cys1105-Cys1134, Cys1118-Cys1160, Cys1142-Cys1184, Cys1164-Cys1178, Cys1186-Cys1210, Cys1205-Cys1235, and Cys1208-Cys1218. Asn837 is a glycosylation site (N-linked (GlcNAc...) asparagine). The VWFD 3 domain maps to 856-1025; the sequence is STCSIYGSGH…NSWKEASTCP (170 aa). Asp870 is a Ca(2+) binding site. Asn892 carries N-linked (GlcNAc...) asparagine glycosylation. The Ca(2+) site is built by Asn991, Asp993, Asn998, and Asp999. Asn1136 and Asn1151 each carry an N-linked (GlcNAc...) asparagine glycan. N-linked (GlcNAc...) asparagine glycans are attached at residues Asn1212, Asn1227, and Asn1243. 4 O-linked (GalNAc) threonine glycosylation sites follow: Thr1264, Thr1267, Thr1268, and Thr1280. Residue Ser1286 is glycosylated (O-linked (GalNAc) serine). Thr1290 carries O-linked (GalNAc) threonine glycosylation. Residues Asn1303, His1306, Ser1309, Gly1313, Asp1314, and Glu1316 each coordinate Ca(2+). N-linked (GlcNAc...) asparagine glycosylation occurs at Asn1350. Residues Asp1373 and Tyr1374 each coordinate Ca(2+). 11 tandem repeats follow at residues 1392-1407, 1408-1423, 1424-1434, 1435-1445, 1446-1456, 1457-1467, 1468-1478, 1479-1489, 1490-1500, 1501-1511, and 1512-1513. Residues 1392–1513 form an approximate repeats region; that stretch reads SPTTSTPISS…TSPTTSTTSP (122 aa). A disordered region spans residues 1392–1513; it reads SPTTSTPISS…TSPTTSTTSP (122 aa).

In terms of assembly, homomultimer; disulfide-linked. The N- and C-terminus mediate their assembly into higher order structures to form filaments. The CTCK domains of two polypeptides associate in the endoplasmic reticulum to generate intermolecularly disulfide-bonded dimers. These dimers progress to the Golgi apparatus, which is a more acidic environment than the endoplasmic reticulum. Under acidic conditions, the N-termini form non-covalent intermolecular interactions that juxtapose assemblies of the third VWD domain (VWD3) from different CTCK-linked dimers. The VWD3 assemblies then become disulfide bonded to one another to produce long, disulfide-linked polymers that remain highly compact until secretion. Interacts with FCGBP. Interacts with AGR2; disulfide-linked. Post-translationally, O-glycosylated. O-glycosylation is required for mucin assembly. Goblet cells synthesize two forms of mucin that differ in branched chain O-glycosylation and the site of production in the colon. In terms of processing, may undergo proteolytic cleavage in the outer mucus layer of the colon, contributing to the expanded volume and loose nature of this layer which allows for bacterial colonization in contrast to the inner mucus layer which is dense and devoid of bacteria. At low pH of 6 and under, undergoes autocatalytic cleavage in vitro in the N-terminal region of the fourth VWD domain. It is likely that this also occurs in vivo and is triggered by the low pH of the late secretory pathway. Expressed in intestine and airway.

It localises to the secreted. In terms of biological role, coats the epithelia of the intestines and other mucus membrane-containing organs to provide a protective, lubricating barrier against particles and infectious agents at mucosal surfaces. Major constituent of the colon mucus, which is mainly formed by large polymeric networks of MUC2 secreted by goblet cells that cover the exposed surfaces of intestine. MUC2 networks form hydrogels that guard the underlying epithelium from pathogens and other hazardous matter entering from the outside world, while permitting nutrient absorption and gas exchange. Acts as a divalent copper chaperone that protects intestinal cells from copper toxicity and facilitates nutritional copper unptake into cells. Binds both Cu(2+) and its reduced form, Cu(1+), at two juxtaposed binding sites: Cu(2+), once reduced to Cu(1+) by vitamin C (ascorbate) or other dietary antioxidants, transits to the other binding site. MUC2-bound Cu(1+) is protected from oxidation in aerobic environments, and can be released for nutritional delivery to cells. Mucin gels store antimicrobial molecules that participate in innate immunity. Mucin glycoproteins also house and feed the microbiome, lubricate tissue surfaces, and may facilitate the removal of contaminants and waste products from the body. Goblet cells synthesize two forms of MUC2 mucin that differ in branched chain O-glycosylation and the site of production in the colon: a (1) 'thick' mucus that wraps the microbiota to form fecal pellets is produced in the proximal, ascending colon. 'Thick' mucus transits along the descending colon and is lubricated by a (2) 'thin' MUC2 mucus produced in the distal colon which adheres to the 'thick' mucus. The protein is Mucin-2 of Rattus norvegicus (Rat).